The chain runs to 594 residues: MHEHLKEKLAILPDQPGCYLMKDKQGTVIYVGKAKVLKNRVRSYFTGSHDGKTLRLVGEIVDFEYIVTSSNLEALILELNLIKKYDPKYNIQLKDDKTYPFIKITAEKQPRLLITRNVKKDKGKYFGPYPNAQSAHETKKLLDRMYPLRKCTNMPDKVCLYYHMGQCLAPCVKEVTEEQNKEIVDEIIKFLNGGHKEVRSELEIKMYEASEKLEFERAKELRDQIAHIDAIMEKQKMIMSDLVDRDVFGYAVDKGWMCVQVFFVRKGKLIERDVSMFPIYDEPEEGFLTFIGQFYENSSHFKPKEIVVPGSIDSELVERFLEVEATQPKRGKKKDLVELANKNAKIALEEKFYLIERDEERTIKAVDHLGKQLGIETPYRIEAFDNSNIQGTNPVSAMIAFIDGKPAKKEYRKYKIKTVQGPDDYESMREVVRRRYTRALKENSPLPDLIIIDGGKGHLAAASDILENELGLYIPMAGLVKDDKHKTSHLIIGVPPEPVMLERNSQEFYLLQRIQDEVHRFAITFHRQLHGKSVIQSALDDIPGIGDKRKKVLLKHFGSLKKMKEASIEEFVEAGMPKNVAETIYTYLTDKKTL.

Residues 14-91 form the GIY-YIG domain; that stretch reads DQPGCYLMKD…IKKYDPKYNI (78 aa). The 36-residue stretch at 196 to 231 folds into the UVR domain; it reads KEVRSELEIKMYEASEKLEFERAKELRDQIAHIDAI.

It belongs to the UvrC family. In terms of assembly, interacts with UvrB in an incision complex.

It localises to the cytoplasm. Functionally, the UvrABC repair system catalyzes the recognition and processing of DNA lesions. UvrC both incises the 5' and 3' sides of the lesion. The N-terminal half is responsible for the 3' incision and the C-terminal half is responsible for the 5' incision. The protein is UvrABC system protein C of Bacillus cereus (strain B4264).